A 152-amino-acid polypeptide reads, in one-letter code: Superoxide dismutase [Cu-Zn] 4A (152 aa).

Cu cation-binding residues include His-45, His-47, and His-62. A disulfide bond links Cys-56 and Cys-145. 4 residues coordinate Zn(2+): His-62, His-70, His-79, and Asp-82. His-119 provides a ligand contact to Cu cation.

This sequence belongs to the Cu-Zn superoxide dismutase family. Homodimer. The cofactor is Cu cation. Zn(2+) serves as cofactor.

It localises to the cytoplasm. It catalyses the reaction 2 superoxide + 2 H(+) = H2O2 + O2. Its function is as follows. Destroys radicals which are normally produced within the cells and which are toxic to biological systems. This Zea mays (Maize) protein is Superoxide dismutase [Cu-Zn] 4A (SODCC.3).